The primary structure comprises 571 residues: Proline--tRNA ligase (571 aa).

This sequence belongs to the class-II aminoacyl-tRNA synthetase family. ProS type 1 subfamily. In terms of assembly, homodimer.

The protein resides in the cytoplasm. The enzyme catalyses tRNA(Pro) + L-proline + ATP = L-prolyl-tRNA(Pro) + AMP + diphosphate. Catalyzes the attachment of proline to tRNA(Pro) in a two-step reaction: proline is first activated by ATP to form Pro-AMP and then transferred to the acceptor end of tRNA(Pro). As ProRS can inadvertently accommodate and process non-cognate amino acids such as alanine and cysteine, to avoid such errors it has two additional distinct editing activities against alanine. One activity is designated as 'pretransfer' editing and involves the tRNA(Pro)-independent hydrolysis of activated Ala-AMP. The other activity is designated 'posttransfer' editing and involves deacylation of mischarged Ala-tRNA(Pro). The misacylated Cys-tRNA(Pro) is not edited by ProRS. The sequence is that of Proline--tRNA ligase from Pseudomonas fluorescens (strain ATCC BAA-477 / NRRL B-23932 / Pf-5).